Reading from the N-terminus, the 439-residue chain is Xylose isomerase (439 aa).

Catalysis depends on residues H101 and D104. Mg(2+)-binding residues include E232, E268, H271, D296, D307, D309, and D339.

This sequence belongs to the xylose isomerase family. As to quaternary structure, homotetramer. The cofactor is Mg(2+).

Its subcellular location is the cytoplasm. The catalysed reaction is alpha-D-xylose = alpha-D-xylulofuranose. The protein is Xylose isomerase of Photorhabdus laumondii subsp. laumondii (strain DSM 15139 / CIP 105565 / TT01) (Photorhabdus luminescens subsp. laumondii).